The chain runs to 820 residues: Leucine--tRNA ligase (820 aa).

A 'HIGH' region motif is present at residues 42 to 52 (PYPSGDLHMGH). The short motif at 576–580 (KMSKS) is the 'KMSKS' region element. Lys579 contacts ATP.

The protein belongs to the class-I aminoacyl-tRNA synthetase family.

The protein localises to the cytoplasm. The enzyme catalyses tRNA(Leu) + L-leucine + ATP = L-leucyl-tRNA(Leu) + AMP + diphosphate. In Coxiella burnetii (strain CbuG_Q212) (Coxiella burnetii (strain Q212)), this protein is Leucine--tRNA ligase.